Here is a 208-residue protein sequence, read N- to C-terminus: Neuroendocrine protein 7B2 (208 aa).

An N-terminal signal peptide occupies residues 1–26 (MGMYSAIPLALPMVLLMVYGLTPSLG). A disulfide bridge links Cys120 with Cys129. Ser204 is modified (phosphoserine).

This sequence belongs to the 7B2 family. In terms of assembly, interacts with pcsk2 early in the secretory pathway. Dissociation occurs at later stages. Proteolytically cleaved in the Golgi by a furin-like convertase to generate bioactive peptides. In terms of processing, sulfated on tyrosine residues.

Its subcellular location is the secreted. Its function is as follows. Acts as a molecular chaperone for pcsk2, preventing its premature activation in the regulated secretory pathway. Binds to inactive pcsk2 in the endoplasmic reticulum and facilitates its transport from there to later compartments of the secretory pathway where it is proteolytically matured and activated. Also required for cleavage of pcsk2 but does not appear to be involved in its folding. The protein is Neuroendocrine protein 7B2 (scg5.L) of Xenopus laevis (African clawed frog).